A 365-amino-acid chain; its full sequence is Dual-specificity RNA methyltransferase RlmN (365 aa).

Glu91 serves as the catalytic Proton acceptor. The Radical SAM core domain occupies 97–337 (ETSRGTLCIS…TTVRKTRGDD (241 aa)). Cys104 and Cys342 are joined by a disulfide. 3 residues coordinate [4Fe-4S] cluster: Cys111, Cys115, and Cys118. S-adenosyl-L-methionine-binding positions include 168–169 (GE), Ser200, 222–224 (SLH), and Asn299. The active-site S-methylcysteine intermediate is the Cys342.

This sequence belongs to the radical SAM superfamily. RlmN family. It depends on [4Fe-4S] cluster as a cofactor.

Its subcellular location is the cytoplasm. The enzyme catalyses adenosine(2503) in 23S rRNA + 2 reduced [2Fe-2S]-[ferredoxin] + 2 S-adenosyl-L-methionine = 2-methyladenosine(2503) in 23S rRNA + 5'-deoxyadenosine + L-methionine + 2 oxidized [2Fe-2S]-[ferredoxin] + S-adenosyl-L-homocysteine. It carries out the reaction adenosine(37) in tRNA + 2 reduced [2Fe-2S]-[ferredoxin] + 2 S-adenosyl-L-methionine = 2-methyladenosine(37) in tRNA + 5'-deoxyadenosine + L-methionine + 2 oxidized [2Fe-2S]-[ferredoxin] + S-adenosyl-L-homocysteine. In terms of biological role, specifically methylates position 2 of adenine 2503 in 23S rRNA and position 2 of adenine 37 in tRNAs. m2A2503 modification seems to play a crucial role in the proofreading step occurring at the peptidyl transferase center and thus would serve to optimize ribosomal fidelity. This is Dual-specificity RNA methyltransferase RlmN from Nitrosospira multiformis (strain ATCC 25196 / NCIMB 11849 / C 71).